The chain runs to 603 residues: Polypeptide N-acetylgalactosaminyltransferase 10 (603 aa).

Over 1-11 (MRRKEKRLLQA) the chain is Cytoplasmic. Residues 12–31 (VALALAALVLLPNVGLWALY) traverse the membrane as a helical; Signal-anchor for type II membrane protein segment. The Lumenal portion of the chain corresponds to 32 to 603 (RERQPDGSPG…STVLENFNRN (572 aa)). 2 N-linked (GlcNAc...) asparagine glycosylation sites follow: asparagine 124 and asparagine 146. 5 disulfides stabilise this stretch: cysteine 135–cysteine 365, cysteine 356–cysteine 432, cysteine 471–cysteine 488, cysteine 523–cysteine 538, and cysteine 563–cysteine 578. Positions 144 to 253 (LPNTSIIIPF…VNWLPPLLDR (110 aa)) are catalytic subdomain A. Residues aspartate 185 and arginine 214 each contribute to the substrate site. Aspartate 237 is a binding site for Mn(2+). Serine 238 contributes to the substrate binding site. Histidine 239 lines the Mn(2+) pocket. The tract at residues 311-373 (PFESPVMAGG…PCSRVGHIYR (63 aa)) is catalytic subdomain B. Substrate is bound at residue tryptophan 342. Mn(2+) is bound at residue histidine 370. 2 residues coordinate substrate: arginine 373 and tyrosine 378. A flexible loop region spans residues 373-384 (RKYVPYKVPAGV). The Ricin B-type lectin domain occupies 458 to 590 (AAWGEIRNVG…SSLTQQWLFE (133 aa)). N-linked (GlcNAc...) asparagine glycosylation is present at asparagine 593.

Belongs to the glycosyltransferase 2 family. GalNAc-T subfamily. Requires Mn(2+) as cofactor. As to expression, highly expressed in the sublingual gland, testis, small intestine, colon and ovary. Expressed at intermediate level in heart, brain, spleen, lung, stomach, cervix and uterus.

The protein localises to the golgi apparatus membrane. It carries out the reaction L-seryl-[protein] + UDP-N-acetyl-alpha-D-galactosamine = a 3-O-[N-acetyl-alpha-D-galactosaminyl]-L-seryl-[protein] + UDP + H(+). It catalyses the reaction L-threonyl-[protein] + UDP-N-acetyl-alpha-D-galactosamine = a 3-O-[N-acetyl-alpha-D-galactosaminyl]-L-threonyl-[protein] + UDP + H(+). The protein operates within protein modification; protein glycosylation. Catalyzes the initial reaction in O-linked oligosaccharide biosynthesis, the transfer of an N-acetyl-D-galactosamine residue to a serine or threonine residue on the protein receptor. Has activity toward Muc5Ac and EA2 peptide substrates. This is Polypeptide N-acetylgalactosaminyltransferase 10 (Galnt10) from Rattus norvegicus (Rat).